A 131-amino-acid chain; its full sequence is Leptin receptor overlapping transcript-like 1 (131 aa).

The next 4 membrane-spanning stretches (helical) occupy residues 7-27 (LISLSFGGAIGLMFLMLGCAL), 32-52 (QYWPLFVLFFYILSPIPYCIA), 69-89 (LAIFLTTGIVVSAFGLPVVFA), and 100-120 (ALVLTGNTVIFATILGFFLVF).

This sequence belongs to the OB-RGRP/VPS55 family. As to quaternary structure, interacts with RAB13.

The protein resides in the membrane. Negatively regulates growth hormone (GH) receptor cell surface expression in liver. May play a role in liver resistance to GH during periods of reduced nutrient availability. The polypeptide is Leptin receptor overlapping transcript-like 1 (Leprotl1) (Mus musculus (Mouse)).